The chain runs to 288 residues: MWPAIIQQLSEQLGKDFHLVEKEKVHGGDINECFMVSDGIDRYFVKTNQREYLTKFTAEVENLRVMRESNTVQVPEYILHGTSKTHAYLVLNYLATKPLDDAERSYEFGVQLANLHRWGEQKEFGFDIDNYIGATVQPNPWHKKWALFFAEQRIGWQLQLMQEKGVNLTNINEFVEMVKTRLANHSPRPSLLHGDLWFGNVANIVNGPLCFDPACYWGDRECDIALAEWFGGFQPEFFQGYESVWPLDWGYEERKDIYNLYHVLNHYNQFGGHYLDEAQKLIEKILSY.

ATP is bound at residue 92–94 (NYL). The active-site Proton acceptor is the aspartate 195.

The protein belongs to the fructosamine kinase family.

Functionally, ketoamine kinase that phosphorylates ketoamines on the third carbon of the sugar moiety to generate ketoamine 3-phosphate. This is Probable ketoamine kinase VC_1539 from Vibrio cholerae serotype O1 (strain ATCC 39315 / El Tor Inaba N16961).